Here is a 291-residue protein sequence, read N- to C-terminus: Release factor glutamine methyltransferase (291 aa).

S-adenosyl-L-methionine is bound by residues 127 to 131 (GTGSG), Asp150, Trp179, and Asn196. 196 to 199 (NPPY) lines the substrate pocket.

The protein belongs to the protein N5-glutamine methyltransferase family. PrmC subfamily.

The enzyme catalyses L-glutaminyl-[peptide chain release factor] + S-adenosyl-L-methionine = N(5)-methyl-L-glutaminyl-[peptide chain release factor] + S-adenosyl-L-homocysteine + H(+). Its function is as follows. Methylates the class 1 translation termination release factors RF1/PrfA and RF2/PrfB on the glutamine residue of the universally conserved GGQ motif. This Thermosynechococcus vestitus (strain NIES-2133 / IAM M-273 / BP-1) protein is Release factor glutamine methyltransferase.